The chain runs to 494 residues: Trigger factor (494 aa).

In terms of domain architecture, PPIase FKBP-type spans Gly169–Val254. Residues Leu441–Glu494 form a disordered region.

The protein belongs to the FKBP-type PPIase family. Tig subfamily.

The protein localises to the cytoplasm. The enzyme catalyses [protein]-peptidylproline (omega=180) = [protein]-peptidylproline (omega=0). Its function is as follows. Involved in protein export. Acts as a chaperone by maintaining the newly synthesized protein in an open conformation. Functions as a peptidyl-prolyl cis-trans isomerase. In Rhizobium johnstonii (strain DSM 114642 / LMG 32736 / 3841) (Rhizobium leguminosarum bv. viciae), this protein is Trigger factor.